The following is a 748-amino-acid chain: Histone-lysine N-methyltransferase EZH2 (748 aa).

The span at 183–199 (DYEDDEDGEDNQDDERD) shows a compositional bias: acidic residues. Disordered regions lie at residues 183–215 (DYEDDEDGEDNQDDERDDITKDQDDNMEEKETL) and 347–428 (TPPK…NIEP). A compositionally biased stretch (basic and acidic residues) spans 200-215 (DITKDQDDNMEEKETL). Positions 348-359 (PPKRPSGRRRGR) are enriched in basic residues. Residues 376 to 387 (EAKDTDSDREAG) show a composition bias toward basic and acidic residues. Positions 505–607 (CRKIQLKKDG…SKNVSCKNCS (103 aa)) constitute a CXC domain. An SET domain is found at 614–729 (KHLLLAPSDV…TGEELFFDYR (116 aa)).

The protein belongs to the class V-like SAM-binding methyltransferase superfamily. Histone-lysine methyltransferase family. EZ subfamily. Component of the prc2/eed-ezh2 complex.

Its subcellular location is the nucleus. It catalyses the reaction L-lysyl(27)-[histone H3] + 3 S-adenosyl-L-methionine = N(6),N(6),N(6)-trimethyl-L-lysyl(27)-[histone H3] + 3 S-adenosyl-L-homocysteine + 3 H(+). Polycomb group (PcG) protein. Catalytic subunit of the prc2/eed-ezh2 complex, which methylates 'Lys-9' and 'Lys-27' of histone H3, leading to transcriptional repression of the affected target gene. May regulate the circadian clock via histone methylation at the promoter of the circadian genes. The chain is Histone-lysine N-methyltransferase EZH2 (ezh2-b) from Xenopus laevis (African clawed frog).